The chain runs to 311 residues: Probable manganese-dependent inorganic pyrophosphatase (311 aa).

The Mn(2+) site is built by His9, Asp13, Asp15, Asp77, His99, and Asp151.

Belongs to the PPase class C family. Mn(2+) is required as a cofactor.

Its subcellular location is the cytoplasm. The enzyme catalyses diphosphate + H2O = 2 phosphate + H(+). This is Probable manganese-dependent inorganic pyrophosphatase from Streptococcus equi subsp. zooepidemicus (strain MGCS10565).